The following is a 486-amino-acid chain: MAGQPDRRINLAVARVIPVVLFGIIIYSCYVITKPLCIDYLIDPLPKYNRPSRVGAGAAILVVFYILLLFVIITYVRLLYTVVYNPDLLPRSQAADQQSTPAKRSKSRSRRKGHGHGHRKSKSDEVSDKPVSDVERALDYNAGPMVLPWDTAGLEYFYKKDVFVCQPDGRPIYCSKCCHYKPDRTHHCREVDRCVRKMDHFCPWVGGVVSETSFKFFIQFVFYTALFCMTVLIVCAIYTAELRQDVSLISGSRNMLIISRLVMLTLIGLSDSLQLAAFNLTTIENLNRRSAVWTLAIRVPNHMISRIQPGTRWAPTFRTITYPLPPVPPPLSGMPTQPATGEGDNPYSPPPVPSTDPSAEQHIFAILQTLPGENPFALGSPLKNLQQVLGHSIIDWLLPIKRSPCADHSSAESEFVMGPVVSRLKKEAGLESKDAAAGSITTKHKNSSYNSSPSAPADKRSKRKQKRGKHHHHHHHHRHSSTTGTT.

A run of 2 helical transmembrane segments spans residues 12–32 (AVAR…CYVI) and 54–74 (VGAG…VIIT). The disordered stretch occupies residues 94-130 (AADQQSTPAKRSKSRSRRKGHGHGHRKSKSDEVSDKP). The segment covering 103-121 (KRSKSRSRRKGHGHGHRKS) has biased composition (basic residues). The DHHC domain occupies 172–222 (IYCSKCCHYKPDRTHHCREVDRCVRKMDHFCPWVGGVVSETSFKFFIQFVF). 2 helical membrane-spanning segments follow: residues 217–237 (FIQF…VCAI) and 261–281 (LVML…FNLT). Disordered stretches follow at residues 326-357 (PVPP…STDP) and 433-486 (KDAA…TGTT). Residues 447-456 (SSYNSSPSAP) are compositionally biased toward low complexity. Basic residues predominate over residues 460–480 (RSKRKQKRGKHHHHHHHHRHS).

Belongs to the DHHC palmitoyltransferase family. PFA5 subfamily. In terms of processing, autopalmitoylated.

The protein resides in the membrane. The catalysed reaction is L-cysteinyl-[protein] + hexadecanoyl-CoA = S-hexadecanoyl-L-cysteinyl-[protein] + CoA. The sequence is that of Palmitoyltransferase pfa5 (pfa5) from Emericella nidulans (strain FGSC A4 / ATCC 38163 / CBS 112.46 / NRRL 194 / M139) (Aspergillus nidulans).